Here is a 738-residue protein sequence, read N- to C-terminus: Catalase-peroxidase (738 aa).

The tract at residues 1–24 (MSEEHPPIAEANSQPSNGCPVAGG) is disordered. The tryptophyl-tyrosyl-methioninium (Trp-Tyr) (with M-257) cross-link spans 108 to 231 (WHAAGTYRVG…LAAVQMGLIY (124 aa)). His109 serves as the catalytic Proton acceptor. The segment at residues 231–257 (YVNPEGPNGNPDPLAAAIDIRETFGRM) is a cross-link (tryptophyl-tyrosyl-methioninium (Tyr-Met) (with W-108)). Position 272 (His272) interacts with heme b.

It belongs to the peroxidase family. Peroxidase/catalase subfamily. Homodimer or homotetramer. The cofactor is heme b. Post-translationally, formation of the three residue Trp-Tyr-Met cross-link is important for the catalase, but not the peroxidase activity of the enzyme.

It catalyses the reaction H2O2 + AH2 = A + 2 H2O. The enzyme catalyses 2 H2O2 = O2 + 2 H2O. Functionally, bifunctional enzyme with both catalase and broad-spectrum peroxidase activity. This is Catalase-peroxidase from Mycobacteroides abscessus (strain ATCC 19977 / DSM 44196 / CCUG 20993 / CIP 104536 / JCM 13569 / NCTC 13031 / TMC 1543 / L948) (Mycobacterium abscessus).